The primary structure comprises 476 residues: Aspartyl/glutamyl-tRNA(Asn/Gln) amidotransferase subunit B (476 aa).

This sequence belongs to the GatB/GatE family. GatB subfamily. In terms of assembly, heterotrimer of A, B and C subunits.

The catalysed reaction is L-glutamyl-tRNA(Gln) + L-glutamine + ATP + H2O = L-glutaminyl-tRNA(Gln) + L-glutamate + ADP + phosphate + H(+). The enzyme catalyses L-aspartyl-tRNA(Asn) + L-glutamine + ATP + H2O = L-asparaginyl-tRNA(Asn) + L-glutamate + ADP + phosphate + 2 H(+). Its function is as follows. Allows the formation of correctly charged Asn-tRNA(Asn) or Gln-tRNA(Gln) through the transamidation of misacylated Asp-tRNA(Asn) or Glu-tRNA(Gln) in organisms which lack either or both of asparaginyl-tRNA or glutaminyl-tRNA synthetases. The reaction takes place in the presence of glutamine and ATP through an activated phospho-Asp-tRNA(Asn) or phospho-Glu-tRNA(Gln). In Lacticaseibacillus paracasei (strain ATCC 334 / BCRC 17002 / CCUG 31169 / CIP 107868 / KCTC 3260 / NRRL B-441) (Lactobacillus paracasei), this protein is Aspartyl/glutamyl-tRNA(Asn/Gln) amidotransferase subunit B.